The chain runs to 511 residues: Coatomer subunit delta (511 aa).

The segment covering 168 to 177 (QARRDAERQG) has biased composition (basic and acidic residues). The interval 168–196 (QARRDAERQGKKAPGFGGFGSSTVSGGST) is disordered. A Phosphoserine modification is found at Ser-223. N6-acetyllysine occurs at positions 233 and 241. Residue Ser-244 is modified to Phosphoserine. In terms of domain architecture, MHD spans 271–511 (MESVHMKIEE…TFLVDKYEIL (241 aa)). An N6-acetyllysine mark is found at Lys-309 and Lys-351. Ser-493 is subject to Phosphoserine.

This sequence belongs to the adaptor complexes medium subunit family. Delta-COP subfamily. Oligomeric complex that consists of at least the alpha, beta, beta', gamma, delta, epsilon and zeta subunits. Ubiquitously expressed.

It is found in the cytoplasm. It localises to the golgi apparatus membrane. The protein resides in the cytoplasmic vesicle. Its subcellular location is the COPI-coated vesicle membrane. Functionally, the coatomer is a cytosolic protein complex that binds to dilysine motifs and reversibly associates with Golgi non-clathrin-coated vesicles, which further mediate biosynthetic protein transport from the ER, via the Golgi up to the trans Golgi network. Coatomer complex is required for budding from Golgi membranes, and is essential for the retrograde Golgi-to-ER transport of dilysine-tagged proteins. In mammals, the coatomer can only be recruited by membranes associated to ADP-ribosylation factors (ARFs), which are small GTP-binding proteins; the complex also influences the Golgi structural integrity, as well as the processing, activity, and endocytic recycling of LDL receptors. This Bos taurus (Bovine) protein is Coatomer subunit delta (ARCN1).